Consider the following 224-residue polypeptide: Serum amyloid P-component (224 aa).

An N-terminal signal peptide occupies residues 1-20; that stretch reads MDKLLLWMFVFTSLLSEAFC. The region spanning 25-224 is the Pentraxin (PTX) domain; that stretch reads KRKVFVFPRE…YVVIRPRVWD (200 aa). Asn-52 carries N-linked (GlcNAc...) asparagine glycosylation. The cysteines at positions 56 and 115 are disulfide-linked. The Ca(2+) site is built by Asp-78, Asn-79, Glu-156, Gln-157, Asp-158, and Gln-168.

It belongs to the pentraxin family. Homopentamer. Pentraxin (or pentaxin) have a discoid arrangement of 5 non-covalently bound subunits. The cofactor is Ca(2+).

It is found in the secreted. The protein is Serum amyloid P-component (Apcs) of Mus musculus (Mouse).